The following is a 174-amino-acid chain: MDNGIFIVATIFVVNILYVTIYTVRLLLTMKGYRYLAALSSVFEMIIYVVALSLVLDNLNNIANVLAYAVGFGVGIIVGMKIEERIALGYITVNVITKEYNLDLPNQIRDLGYGVTSWLASGRDGERMMLEILTQRKNERKLYKQIIEIDNGAFIVSSEPKQIHGGFWIKQVRK.

The next 3 membrane-spanning stretches (helical) occupy residues 4–24 (GIFI…IYTV), 36–56 (LAAL…SLVL), and 62–82 (IANV…GMKI).

This sequence belongs to the UPF0316 family.

The protein localises to the cell membrane. This Listeria innocua serovar 6a (strain ATCC BAA-680 / CLIP 11262) protein is UPF0316 protein lin1888.